A 342-amino-acid chain; its full sequence is Cell division protein ZipA (342 aa).

Residues 1–6 (MEDLQL) are Periplasmic-facing. Residues 7 to 27 (VLFILGAIAIVAVLVHGFWSI) form a helical membrane-spanning segment. Over 28–342 (RRQQPKSLKD…DYLHRIRANA (315 aa)) the chain is Cytoplasmic. Residues 33 to 57 (KSLKDSPMGNFYKQQADKESPPKRV) are disordered. Positions 47 to 57 (QADKESPPKRV) are enriched in basic and acidic residues.

It belongs to the ZipA family. As to quaternary structure, interacts with FtsZ via their C-terminal domains.

The protein localises to the cell inner membrane. In terms of biological role, essential cell division protein that stabilizes the FtsZ protofilaments by cross-linking them and that serves as a cytoplasmic membrane anchor for the Z ring. Also required for the recruitment to the septal ring of downstream cell division proteins. The protein is Cell division protein ZipA of Shewanella putrefaciens (strain CN-32 / ATCC BAA-453).